A 468-amino-acid polypeptide reads, in one-letter code: Ribulose bisphosphate carboxylase large chain (468 aa).

K5 carries the post-translational modification N6,N6,N6-trimethyllysine. Substrate is bound by residues N114 and T164. K166 (proton acceptor) is an active-site residue. K168 serves as a coordination point for substrate. Mg(2+) is bound by residues K192, D194, and E195. At K192 the chain carries N6-carboxylysine. H285 (proton acceptor) is an active-site residue. Substrate-binding residues include R286, H318, and S370.

Belongs to the RuBisCO large chain family. Type I subfamily. Heterohexadecamer of 8 large chains and 8 small chains; disulfide-linked. The disulfide link is formed within the large subunit homodimers. Requires Mg(2+) as cofactor. Post-translationally, the disulfide bond which can form in the large chain dimeric partners within the hexadecamer appears to be associated with oxidative stress and protein turnover.

It is found in the plastid. It localises to the chloroplast. It carries out the reaction 2 (2R)-3-phosphoglycerate + 2 H(+) = D-ribulose 1,5-bisphosphate + CO2 + H2O. The catalysed reaction is D-ribulose 1,5-bisphosphate + O2 = 2-phosphoglycolate + (2R)-3-phosphoglycerate + 2 H(+). Its function is as follows. RuBisCO catalyzes two reactions: the carboxylation of D-ribulose 1,5-bisphosphate, the primary event in carbon dioxide fixation, as well as the oxidative fragmentation of the pentose substrate in the photorespiration process. Both reactions occur simultaneously and in competition at the same active site. The chain is Ribulose bisphosphate carboxylase large chain from Tecoma stans (Yellow bells).